The chain runs to 154 residues: SsrA-binding protein (154 aa).

The protein belongs to the SmpB family.

It is found in the cytoplasm. Functionally, required for rescue of stalled ribosomes mediated by trans-translation. Binds to transfer-messenger RNA (tmRNA), required for stable association of tmRNA with ribosomes. tmRNA and SmpB together mimic tRNA shape, replacing the anticodon stem-loop with SmpB. tmRNA is encoded by the ssrA gene; the 2 termini fold to resemble tRNA(Ala) and it encodes a 'tag peptide', a short internal open reading frame. During trans-translation Ala-aminoacylated tmRNA acts like a tRNA, entering the A-site of stalled ribosomes, displacing the stalled mRNA. The ribosome then switches to translate the ORF on the tmRNA; the nascent peptide is terminated with the 'tag peptide' encoded by the tmRNA and targeted for degradation. The ribosome is freed to recommence translation, which seems to be the essential function of trans-translation. The chain is SsrA-binding protein from Synechocystis sp. (strain ATCC 27184 / PCC 6803 / Kazusa).